Here is a 321-residue protein sequence, read N- to C-terminus: Annexin A5 (321 aa).

Annexin repeat units lie at residues 15 to 86 (FDAR…SLMR), 87 to 158 (PARI…VLLQ), 170 to 242 (ALVE…AVVK), and 246 to 317 (SVPA…LLCG).

It belongs to the annexin family.

Its function is as follows. Collagen-binding protein. The protein is Annexin A5 (ANXA5) of Gallus gallus (Chicken).